A 159-amino-acid polypeptide reads, in one-letter code: HSP70 co-chaperone SNL1 (159 aa).

Topologically, residues 1 to 12 (MSHNAMEHWKSK) are perinuclear space. A helical; Signal-anchor for type II membrane protein membrane pass occupies residues 13–35 (LSKTSTSTYVLLAVIAVVFLVTI). Over 36 to 159 (RRPNGSKGKS…AMLKSLDSLK (124 aa)) the chain is Cytoplasmic. The segment at 39–64 (NGSKGKSSKKRASKKNKKGKNQFEKA) is disordered. The span at 44–58 (KSSKKRASKKNKKGK) shows a compositional bias: basic residues. The BAG domain maps to 73–159 (QIDNVSLRYG…AMLKSLDSLK (87 aa)).

In terms of assembly, interacts with the HSP70 family members SSA1, SSA4, and SSB1. These interactions are strongly reduced by ADP and ATP.

It localises to the endoplasmic reticulum membrane. Its subcellular location is the nucleus membrane. Its function is as follows. Stimulator of ATPase activity of molecular chaperones of the HSP70 family (principally of the SSA class). Stimulation is important for HSP70-substrate complex dissociation after folding of newly synthesized or refolded proteins. SNL1 is probably involved in nuclear pore biogenesis and in particular the folding or refolding of misfolded NUP116, GLE2 and NIC96. The protein is HSP70 co-chaperone SNL1 (SNL1) of Saccharomyces cerevisiae (strain ATCC 204508 / S288c) (Baker's yeast).